Here is a 100-residue protein sequence, read N- to C-terminus: U-myrmeciitoxin(01)-Mg7c (100 aa).

The first 17 residues, 1 to 17, serve as a signal peptide directing secretion; the sequence is MKLSYLSLALAIILVLA. The propeptide occupies 18-50; that stretch reads IVYSPHMEVKALADAEPDAIGFADAFGEADAEP. O-linked (GalNAc...) serine glycosylation occurs at serine 85. 2 O-linked (GalNAc...) threonine glycosylation sites follow: threonine 94 and threonine 95.

The protein belongs to the formicidae venom precursor-01 superfamily. Glycosylation is critical to maintaining the aqueous solubility of this protein, but does not directly contribute to its activity. In terms of tissue distribution, expressed by the venom gland.

It localises to the secreted. The protein resides in the target cell membrane. Functionally, neurotoxin that triggers pain behavior and inflammation in mammals, and is paralytic and lethal to insects. Causes a time-dependent increase in cell leak current. May act by targeting membranes. The sequence is that of U-myrmeciitoxin(01)-Mg7c from Myrmecia gulosa (Red bulldog ant).